A 220-amino-acid chain; its full sequence is NADH-quinone oxidoreductase subunit I (220 aa).

4Fe-4S ferredoxin-type domains lie at 71–102 (LQRL…IITH) and 112–141 (DSYT…MGNR). Positions 82, 85, 88, 92, 121, 124, 127, and 131 each coordinate [4Fe-4S] cluster. Residues 187–220 (MQATPLDYVQEPSKEESKEETPTRSESHKGDENV) are disordered. A compositionally biased stretch (basic and acidic residues) spans 198–220 (PSKEESKEETPTRSESHKGDENV).

The protein belongs to the complex I 23 kDa subunit family. In terms of assembly, NDH-1 is composed of 14 different subunits. Subunits NuoA, H, J, K, L, M, N constitute the membrane sector of the complex. It depends on [4Fe-4S] cluster as a cofactor.

The protein resides in the cell inner membrane. It carries out the reaction a quinone + NADH + 5 H(+)(in) = a quinol + NAD(+) + 4 H(+)(out). Functionally, NDH-1 shuttles electrons from NADH, via FMN and iron-sulfur (Fe-S) centers, to quinones in the respiratory chain. The immediate electron acceptor for the enzyme in this species is believed to be ubiquinone. Couples the redox reaction to proton translocation (for every two electrons transferred, four hydrogen ions are translocated across the cytoplasmic membrane), and thus conserves the redox energy in a proton gradient. This is NADH-quinone oxidoreductase subunit I from Helicobacter pylori (strain G27).